Reading from the N-terminus, the 388-residue chain is Mannitol-1-phosphate 5-dehydrogenase (388 aa).

3-14 (ALHFGAGNIGRG) contributes to the NAD(+) binding site.

The protein belongs to the mannitol dehydrogenase family.

The catalysed reaction is D-mannitol 1-phosphate + NAD(+) = beta-D-fructose 6-phosphate + NADH + H(+). The polypeptide is Mannitol-1-phosphate 5-dehydrogenase (Buchnera aphidicola subsp. Schizaphis graminum (strain Sg)).